A 96-amino-acid polypeptide reads, in one-letter code: Large ribosomal subunit protein uL23 (96 aa).

Belongs to the universal ribosomal protein uL23 family. Part of the 50S ribosomal subunit. Contacts protein L29, and trigger factor when it is bound to the ribosome.

One of the early assembly proteins it binds 23S rRNA. One of the proteins that surrounds the polypeptide exit tunnel on the outside of the ribosome. Forms the main docking site for trigger factor binding to the ribosome. The chain is Large ribosomal subunit protein uL23 from Caldanaerobacter subterraneus subsp. tengcongensis (strain DSM 15242 / JCM 11007 / NBRC 100824 / MB4) (Thermoanaerobacter tengcongensis).